The following is a 104-amino-acid chain: Phosphoribosyl-ATP pyrophosphatase (104 aa).

This sequence belongs to the PRA-PH family.

It localises to the cytoplasm. The enzyme catalyses 1-(5-phospho-beta-D-ribosyl)-ATP + H2O = 1-(5-phospho-beta-D-ribosyl)-5'-AMP + diphosphate + H(+). Its pathway is amino-acid biosynthesis; L-histidine biosynthesis; L-histidine from 5-phospho-alpha-D-ribose 1-diphosphate: step 2/9. This is Phosphoribosyl-ATP pyrophosphatase from Streptococcus sanguinis (strain SK36).